A 478-amino-acid polypeptide reads, in one-letter code: Lipoprotein lipase (478 aa).

The first 27 residues, 1-27 (MESKVLLLLALSVWLQSLTVSRGGLVA), serve as a signal peptide directing secretion. The interaction with GPIHBP1 stretch occupies residues 35–56 (KDFRDIESKFALRTPEDTAEDT). Residues Cys-57 and Cys-70 are joined by a disulfide bond. N-linked (GlcNAc...) asparagine glycosylation is present at Asn-73. The residue at position 124 (Tyr-124) is a 3'-nitrotyrosine. Catalysis depends on Ser-162, which acts as the Nucleophile. Residue Asp-186 is the Charge relay system of the active site. Tyr-194 carries the post-translational modification 3'-nitrotyrosine. Ca(2+) contacts are provided by Ala-197, Arg-200, Ser-202, and Asp-205. Cys-246 and Cys-269 are oxidised to a cystine. The interval 246-269 (CNIGEALRVIAERGLGDVDQLVKC) is essential for determining substrate specificity. Residue His-271 is the Charge relay system of the active site. 2 cysteine pairs are disulfide-bonded: Cys-294-Cys-313 and Cys-305-Cys-308. Residues 344-467 (FHYQVKIHFS…KGKSPVIFVK (124 aa)) form the PLAT domain. Tyr-346 carries the 3'-nitrotyrosine modification. Asn-389 carries N-linked (GlcNAc...) asparagine glycosylation. The interval 420-424 (WSNWW) is important for interaction with lipoprotein particles. Positions 433-437 (KIRVK) are important for heparin binding. An interaction with GPIHBP1 region spans residues 446–470 (IFCSREKMSYLQKGKSPVIFVKCHD). An intrachain disulfide couples Cys-448 to Cys-468.

The protein belongs to the AB hydrolase superfamily. Lipase family. In terms of assembly, homodimer. Interacts with GPIHBP1 with 1:1 stoichiometry. Interacts with APOC2; the interaction activates LPL activity in the presence of lipids. Interaction with heparan sulfate proteoglycans is required to protect LPL against loss of activity. Associates with lipoprotein particles in blood plasma. Interacts with LMF1 and SEL1L; interaction with SEL1L is required to prevent aggregation of newly synthesized LPL in the endoplasmic reticulum (ER), and for normal export of LPL from the ER to the extracellular space. Interacts with SORL1; SORL1 acts as a sorting receptor, promoting LPL localization to endosomes and later to lysosomes, leading to degradation of newly synthesized LPL. Post-translationally, tyrosine nitration after lipopolysaccharide (LPS) challenge down-regulates the lipase activity.

The protein resides in the cell membrane. It localises to the secreted. The protein localises to the extracellular space. Its subcellular location is the extracellular matrix. It catalyses the reaction a triacylglycerol + H2O = a diacylglycerol + a fatty acid + H(+). The catalysed reaction is a 1,2-diacyl-sn-glycero-3-phosphocholine + H2O = a 2-acyl-sn-glycero-3-phosphocholine + a fatty acid + H(+). The enzyme catalyses 1,2,3-tri-(9Z-octadecenoyl)-glycerol + H2O = di-(9Z)-octadecenoylglycerol + (9Z)-octadecenoate + H(+). It carries out the reaction 1,2-di-(9Z-octadecenoyl)-sn-glycero-3-phosphocholine + H2O = (9Z-octadecenoyl)-sn-glycero-3-phosphocholine + (9Z)-octadecenoate + H(+). It catalyses the reaction 1,2,3-tributanoylglycerol + H2O = dibutanoylglycerol + butanoate + H(+). The catalysed reaction is 1,2-dihexadecanoyl-sn-glycero-3-phosphocholine + H2O = hexadecanoyl-sn-glycero-3-phosphocholine + hexadecanoate + H(+). The apolipoprotein APOC2 acts as a coactivator of LPL activity. Ca(2+) binding promotes protein stability and formation of the active homodimer. Interaction with GPIHBP1 protects LPL against inactivation by ANGPTL4. In terms of biological role, key enzyme in triglyceride metabolism. Catalyzes the hydrolysis of triglycerides from circulating chylomicrons and very low density lipoproteins (VLDL), and thereby plays an important role in lipid clearance from the blood stream, lipid utilization and storage. Although it has both phospholipase and triglyceride lipase activities it is primarily a triglyceride lipase with low but detectable phospholipase activity. Mediates margination of triglyceride-rich lipoprotein particles in capillaries. Recruited to its site of action on the luminal surface of vascular endothelium by binding to GPIHBP1 and cell surface heparan sulfate proteoglycans. This chain is Lipoprotein lipase (LPL), found in Ovis aries (Sheep).